We begin with the raw amino-acid sequence, 369 residues long: Phenylalanine--tRNA ligase alpha subunit (369 aa).

Glutamate 269 lines the Mg(2+) pocket.

It belongs to the class-II aminoacyl-tRNA synthetase family. Phe-tRNA synthetase alpha subunit type 1 subfamily. As to quaternary structure, tetramer of two alpha and two beta subunits. It depends on Mg(2+) as a cofactor.

It is found in the cytoplasm. It catalyses the reaction tRNA(Phe) + L-phenylalanine + ATP = L-phenylalanyl-tRNA(Phe) + AMP + diphosphate + H(+). The polypeptide is Phenylalanine--tRNA ligase alpha subunit (Nitrobacter winogradskyi (strain ATCC 25391 / DSM 10237 / CIP 104748 / NCIMB 11846 / Nb-255)).